A 202-amino-acid chain; its full sequence is Cilia- and flagella-associated protein 418 (202 aa).

A disordered region spans residues 71-90 (DVDTPTSTHEPSPAKASSSA). Polar residues predominate over residues 74–90 (TPTSTHEPSPAKASSSA).

In terms of tissue distribution, ubiquitously expressed during early development and in adult tissues including the eye, brain, heart and kidney.

It is found in the cytoplasm. Its subcellular location is the photoreceptor inner segment. May be involved in photoreceptor outer segment disk morphogenesis. This is Cilia- and flagella-associated protein 418 (cfap418) from Danio rerio (Zebrafish).